We begin with the raw amino-acid sequence, 156 residues long: RNA pyrophosphohydrolase (156 aa).

Residues 6-148 (NYRPNVAAIV…KKNIYVRVIK (143 aa)) form the Nudix hydrolase domain. A Nudix box motif is present at residues 43–64 (GGIDKGESVKNALFRELKEEIG).

Belongs to the Nudix hydrolase family. RppH subfamily. The cofactor is a divalent metal cation.

Functionally, accelerates the degradation of transcripts by removing pyrophosphate from the 5'-end of triphosphorylated RNA, leading to a more labile monophosphorylated state that can stimulate subsequent ribonuclease cleavage. This is RNA pyrophosphohydrolase from Campylobacter jejuni subsp. jejuni serotype O:2 (strain ATCC 700819 / NCTC 11168).